The primary structure comprises 200 residues: Lipopolysaccharide core heptose(II)-phosphate phosphatase (200 aa).

Residues 1–25 form the signal peptide; sequence MLAFCRSSLKSKKYFIILLALAAIA.

This sequence belongs to the phosphoglycerate mutase family. Ais subfamily.

The protein localises to the periplasm. Its pathway is bacterial outer membrane biogenesis; lipopolysaccharide metabolism. In terms of biological role, catalyzes the dephosphorylation of heptose(II) of the outer membrane lipopolysaccharide core. This chain is Lipopolysaccharide core heptose(II)-phosphate phosphatase, found in Escherichia coli O6:H1 (strain CFT073 / ATCC 700928 / UPEC).